The following is a 61-amino-acid chain: MPFVTIDLFEGRSQEQKNQLAREVTEVVSRIAKAPKENIHVFINDMPEGTYYPQGEMKQKS.

The Proton acceptor; via imino nitrogen role is filled by Pro2.

The protein belongs to the 4-oxalocrotonate tautomerase family.

This is Probable tautomerase spyM18_1099 from Streptococcus pyogenes serotype M18 (strain MGAS8232).